The primary structure comprises 302 residues: Spermidine synthase (302 aa).

Met1 is subject to N-acetylmethionine. The 236-residue stretch at 18–253 folds into the PABS domain; it reads EGWFRETCSL…GQIGFMLCSK (236 aa). Gln49 contacts S-adenosyl 3-(methylsulfanyl)propylamine. Putrescine is bound at residue Tyr79. S-adenosyl 3-(methylsulfanyl)propylamine-binding positions include Gln80, Asp104, Glu124, 155–156, and Asp173; that span reads DG. The active-site Proton acceptor is the Asp173. Putrescine contacts are provided by residues 173-176 and Tyr241; that span reads DSSD.

This sequence belongs to the spermidine/spermine synthase family. In terms of assembly, homodimer or homotetramer.

It catalyses the reaction S-adenosyl 3-(methylsulfanyl)propylamine + putrescine = S-methyl-5'-thioadenosine + spermidine + H(+). It functions in the pathway amine and polyamine biosynthesis; spermidine biosynthesis; spermidine from putrescine: step 1/1. The activity is thought to be regulated mainly by the availability of decarboxylated S-adenosylmethionine. Functionally, catalyzes the production of spermidine from putrescine and decarboxylated S-adenosylmethionine (dcSAM). Has a strong preference for putrescine as substrate, and has very low activity towards 1,3-diaminopropane. Has extremely low activity towards spermidine. This chain is Spermidine synthase (SRM), found in Homo sapiens (Human).